Consider the following 226-residue polypeptide: Cytochrome c oxidase subunit 2 (226 aa).

At 1-14 the chain is on the mitochondrial intermembrane side; sequence MAYPLQLGLQDATS. Residues 15-45 form a helical membrane-spanning segment; that stretch reads PIMEELTSFHDHTLMIVFLISTLVLYIISLM. Over 46–59 the chain is Mitochondrial matrix; that stretch reads LTTKLTHTSTMDAQ. Residues 60 to 87 form a helical membrane-spanning segment; that stretch reads EIETIWTILPAIILIMIALPSLRVLYMM. The Mitochondrial intermembrane portion of the chain corresponds to 88-226; the sequence is DEINNPALTV…KYFEAWSASM (139 aa). Residues histidine 161, cysteine 196, glutamate 198, cysteine 200, histidine 204, and methionine 207 each coordinate Cu cation. Glutamate 198 lines the Mg(2+) pocket. Phosphotyrosine is present on tyrosine 218.

The protein belongs to the cytochrome c oxidase subunit 2 family. As to quaternary structure, component of the cytochrome c oxidase (complex IV, CIV), a multisubunit enzyme composed of 14 subunits. The complex is composed of a catalytic core of 3 subunits MT-CO1, MT-CO2 and MT-CO3, encoded in the mitochondrial DNA, and 11 supernumerary subunits COX4I, COX5A, COX5B, COX6A, COX6B, COX6C, COX7A, COX7B, COX7C, COX8 and NDUFA4, which are encoded in the nuclear genome. The complex exists as a monomer or a dimer and forms supercomplexes (SCs) in the inner mitochondrial membrane with NADH-ubiquinone oxidoreductase (complex I, CI) and ubiquinol-cytochrome c oxidoreductase (cytochrome b-c1 complex, complex III, CIII), resulting in different assemblies (supercomplex SCI(1)III(2)IV(1) and megacomplex MCI(2)III(2)IV(2)). Found in a complex with TMEM177, COA6, COX18, COX20, SCO1 and SCO2. Interacts with TMEM177 in a COX20-dependent manner. Interacts with COX20. Interacts with COX16. Cu cation is required as a cofactor.

It is found in the mitochondrion inner membrane. It catalyses the reaction 4 Fe(II)-[cytochrome c] + O2 + 8 H(+)(in) = 4 Fe(III)-[cytochrome c] + 2 H2O + 4 H(+)(out). Component of the cytochrome c oxidase, the last enzyme in the mitochondrial electron transport chain which drives oxidative phosphorylation. The respiratory chain contains 3 multisubunit complexes succinate dehydrogenase (complex II, CII), ubiquinol-cytochrome c oxidoreductase (cytochrome b-c1 complex, complex III, CIII) and cytochrome c oxidase (complex IV, CIV), that cooperate to transfer electrons derived from NADH and succinate to molecular oxygen, creating an electrochemical gradient over the inner membrane that drives transmembrane transport and the ATP synthase. Cytochrome c oxidase is the component of the respiratory chain that catalyzes the reduction of oxygen to water. Electrons originating from reduced cytochrome c in the intermembrane space (IMS) are transferred via the dinuclear copper A center (CU(A)) of subunit 2 and heme A of subunit 1 to the active site in subunit 1, a binuclear center (BNC) formed by heme A3 and copper B (CU(B)). The BNC reduces molecular oxygen to 2 water molecules using 4 electrons from cytochrome c in the IMS and 4 protons from the mitochondrial matrix. This chain is Cytochrome c oxidase subunit 2 (MT-CO2), found in Perognathus flavus (Silky pocket mouse).